The following is a 433-amino-acid chain: Ribosome biogenesis protein WDR12 homolog (433 aa).

The ubiquitin-like (UBL) domain stretch occupies residues 21 to 102; the sequence is VEVFVVSYRH…ESVISIECIV (82 aa). WD repeat units follow at residues 114–151, 153–194, 203–242, 270–310, 312–351, 357–397, and 401–433; these read ALLDWIGAIRCNDKFIASATYGGELVLWNHYGKKLTSS, LHEE…SSTF, GHERSVEAIAVNTDGTRTVSGGFDKMLKVWNTDKDDTSTV, GHKD…QINT, AAKKAFTSISVCCSSGMLITGSVDPVVRLWDPRSHEGTLV, GHCG…TPLY, and GHSDRILCCDWSVNELIVSGGVDCTMKTYRRKM.

It belongs to the WD repeat WDR12/YTM1 family.

The protein resides in the nucleus. The protein localises to the nucleolus. Its subcellular location is the nucleoplasm. Its function is as follows. Required for maturation of ribosomal RNAs and formation of the large ribosomal subunit. In Brugia malayi (Filarial nematode worm), this protein is Ribosome biogenesis protein WDR12 homolog.